Reading from the N-terminus, the 348-residue chain is UPF0283 membrane protein HAPS_0079 (348 aa).

The next 3 helical transmembrane spans lie at 57-77 (FLAALALFGIATIAQSVQWLI), 86-106 (IYFAFAVAFFGISLAGVGAII), and 203-223 (ENAIIVAVSPLALVDILMVAW).

The protein belongs to the UPF0283 family.

The protein localises to the cell inner membrane. The chain is UPF0283 membrane protein HAPS_0079 from Glaesserella parasuis serovar 5 (strain SH0165) (Haemophilus parasuis).